A 237-amino-acid polypeptide reads, in one-letter code: Uridylate kinase (237 aa).

Position 11-14 (11-14 (KLSG)) interacts with ATP. Gly52 serves as a coordination point for UMP. Residues Gly53 and Arg57 each contribute to the ATP site. Residues Asp72 and 134–141 (TGYSYFTT) each bind UMP. ATP-binding residues include Asn162, Tyr168, and Asp171.

It belongs to the UMP kinase family. In terms of assembly, homohexamer.

The protein resides in the cytoplasm. The enzyme catalyses UMP + ATP = UDP + ADP. It participates in pyrimidine metabolism; CTP biosynthesis via de novo pathway; UDP from UMP (UMPK route): step 1/1. Inhibited by UTP. Its function is as follows. Catalyzes the reversible phosphorylation of UMP to UDP. In Mycoplasma capricolum subsp. capricolum (strain California kid / ATCC 27343 / NCTC 10154), this protein is Uridylate kinase.